We begin with the raw amino-acid sequence, 265 residues long: Phosphonates import ATP-binding protein PhnC 1 (265 aa).

The ABC transporter domain occupies 7-252 (IEVSNLSKSF…KLNEIYGTAA (246 aa)). 39 to 46 (GASGSGKS) contacts ATP.

The protein belongs to the ABC transporter superfamily. Phosphonates importer (TC 3.A.1.9.1) family. As to quaternary structure, the complex is composed of two ATP-binding proteins (PhnC), two transmembrane proteins (PhnE) and a solute-binding protein (PhnD).

The protein resides in the cell inner membrane. It catalyses the reaction phosphonate(out) + ATP + H2O = phosphonate(in) + ADP + phosphate + H(+). In terms of biological role, part of the ABC transporter complex PhnCDE involved in phosphonates import. Responsible for energy coupling to the transport system. In Nostoc sp. (strain PCC 7120 / SAG 25.82 / UTEX 2576), this protein is Phosphonates import ATP-binding protein PhnC 1.